We begin with the raw amino-acid sequence, 574 residues long: Uric acid-xanthine permease (574 aa).

Positions M1–P20 are disordered. 12 helical membrane-spanning segments follow: residues L77–P97, L111–I131, Y141–A161, A188–V209, I217–T237, L264–L284, C296–F315, V338–V361, C427–I447, V451–V471, F482–G502, and L522–M542. The interval M555–A574 is disordered. A Glycyl lysine isopeptide (Lys-Gly) (interchain with G-Cter in ubiquitin) cross-link involves residue K572.

This sequence belongs to the nucleobase:cation symporter-2 (NCS2) (TC 2.A.40) family. In terms of processing, ubiquitinated by hulA. Ubiquitination leads to internalization, sorting into the endosomal pathway to the vacuolar lumen where uapA is eventually degraded.

It is found in the cell membrane. In terms of biological role, uric acid-xanthine transporter. This chain is Uric acid-xanthine permease (uapA), found in Emericella nidulans (strain FGSC A4 / ATCC 38163 / CBS 112.46 / NRRL 194 / M139) (Aspergillus nidulans).